Reading from the N-terminus, the 284-residue chain is Bifunctional protein FolD (284 aa).

NADP(+) is bound by residues 165–167 (GRS), Ser-190, and Val-231.

The protein belongs to the tetrahydrofolate dehydrogenase/cyclohydrolase family. Homodimer.

It carries out the reaction (6R)-5,10-methylene-5,6,7,8-tetrahydrofolate + NADP(+) = (6R)-5,10-methenyltetrahydrofolate + NADPH. It catalyses the reaction (6R)-5,10-methenyltetrahydrofolate + H2O = (6R)-10-formyltetrahydrofolate + H(+). It participates in one-carbon metabolism; tetrahydrofolate interconversion. Its function is as follows. Catalyzes the oxidation of 5,10-methylenetetrahydrofolate to 5,10-methenyltetrahydrofolate and then the hydrolysis of 5,10-methenyltetrahydrofolate to 10-formyltetrahydrofolate. This Bacillus licheniformis (strain ATCC 14580 / DSM 13 / JCM 2505 / CCUG 7422 / NBRC 12200 / NCIMB 9375 / NCTC 10341 / NRRL NRS-1264 / Gibson 46) protein is Bifunctional protein FolD.